Here is a 271-residue protein sequence, read N- to C-terminus: Phosphonoacetaldehyde hydrolase (271 aa).

Asp-12 (nucleophile) is an active-site residue. Mg(2+)-binding residues include Asp-12 and Ala-14. Catalysis depends on Lys-54, which acts as the Schiff-base intermediate with substrate. Residue Asp-188 coordinates Mg(2+).

The protein belongs to the HAD-like hydrolase superfamily. PhnX family. As to quaternary structure, homodimer. Mg(2+) serves as cofactor.

The catalysed reaction is phosphonoacetaldehyde + H2O = acetaldehyde + phosphate + H(+). In terms of biological role, involved in phosphonate degradation. This Vibrio parahaemolyticus serotype O3:K6 (strain RIMD 2210633) protein is Phosphonoacetaldehyde hydrolase.